The following is a 346-amino-acid chain: Phosphoribosylformylglycinamidine cyclo-ligase (346 aa).

The protein belongs to the AIR synthase family.

Its subcellular location is the cytoplasm. The catalysed reaction is 2-formamido-N(1)-(5-O-phospho-beta-D-ribosyl)acetamidine + ATP = 5-amino-1-(5-phospho-beta-D-ribosyl)imidazole + ADP + phosphate + H(+). The protein operates within purine metabolism; IMP biosynthesis via de novo pathway; 5-amino-1-(5-phospho-D-ribosyl)imidazole from N(2)-formyl-N(1)-(5-phospho-D-ribosyl)glycinamide: step 2/2. The protein is Phosphoribosylformylglycinamidine cyclo-ligase of Bacillus cereus (strain B4264).